Here is a 232-residue protein sequence, read N- to C-terminus: Thrombin-like enzyme BjussuSP-1 (232 aa).

Positions 1-223 (VLGGDECDIN…YTDWIQRNIA (223 aa)) constitute a Peptidase S1 domain. 6 disulfides stabilise this stretch: cysteine 7–cysteine 138, cysteine 25–cysteine 41, cysteine 73–cysteine 230, cysteine 117–cysteine 184, cysteine 149–cysteine 163, and cysteine 174–cysteine 199. The Charge relay system role is filled by histidine 40. N-linked (GlcNAc...) asparagine glycosylation is present at asparagine 77. Aspartate 85 serves as the catalytic Charge relay system. Asparagine 129 is a glycosylation site (N-linked (GlcNAc...) asparagine). Serine 178 (charge relay system) is an active-site residue.

This sequence belongs to the peptidase S1 family. Snake venom subfamily. Monomer. In terms of processing, N-glycosylated. Contains sialic acid residues. Deglycosylation reduces in 50% the formation of fibrin clot. As to expression, expressed by the venom gland.

Its subcellular location is the secreted. With respect to regulation, inhibited by leupeptin, heparin, and 1.10-phenantroline. Functionally, thrombin-like enzyme that shows clotting activity upon human plasma. Shows specific fibrinogenolytic activity for Aalpha chain (FGA). Hydrolyzes fibrin, BAPNA and TAME, as well as chromogenic artificial substrates of the blood coagulation cascasde: S-27654 for factor X (F10), S-2302 for kallikrein (KLK), factor XIa (F11), and XIIa (F12), and S-2266 for kallikrein and factor XIa (F11). Subcutaneous injection into mice induces a mild edema. Intravenous and intramuscular injection reduce plasma fibrinogen concentration and increase the levels of fibrin(ogen) degradation products. Intramuscular injection also promotes an increase in the expression of proMMP-9, but is unable to activate it. The chain is Thrombin-like enzyme BjussuSP-1 from Bothrops jararacussu (Jararacussu).